Consider the following 161-residue polypeptide: Large ribosomal subunit protein uL30m (161 aa).

The N-terminal 34 residues, 1–34 (MAGILRSIVQRPPGRLQTATKGVEPLVCVDWIRH), are a transit peptide targeting the mitochondrion.

This sequence belongs to the universal ribosomal protein uL30 family. Component of the mitochondrial ribosome large subunit (39S) which comprises a 16S rRNA and about 50 distinct proteins.

It is found in the mitochondrion. This Bos taurus (Bovine) protein is Large ribosomal subunit protein uL30m (MRPL30).